A 187-amino-acid chain; its full sequence is Large ribosomal subunit protein uL22 (187 aa).

This sequence belongs to the universal ribosomal protein uL22 family.

The polypeptide is Large ribosomal subunit protein uL22 (RPL17) (Theileria annulata).